The following is a 223-amino-acid chain: Urease accessory protein UreF (223 aa).

The protein belongs to the UreF family. As to quaternary structure, ureD, UreF and UreG form a complex that acts as a GTP-hydrolysis-dependent molecular chaperone, activating the urease apoprotein by helping to assemble the nickel containing metallocenter of UreC. The UreE protein probably delivers the nickel.

It is found in the cytoplasm. Required for maturation of urease via the functional incorporation of the urease nickel metallocenter. This chain is Urease accessory protein UreF, found in Rhizobium etli (strain ATCC 51251 / DSM 11541 / JCM 21823 / NBRC 15573 / CFN 42).